The primary structure comprises 561 residues: Potassium-transporting ATPase potassium-binding subunit (561 aa).

Helical transmembrane passes span 4–24, 65–85, 133–153, 177–197, 253–273, 285–305, 380–400, 417–437, 484–504, and 528–548; these read IVMQ…PLGI, AVSV…VLML, IGLT…LFAV, LYIL…QGVV, FTNL…VVMF, AIMT…TISE, GLYG…LLVG, MVCL…AVAV, MVGA…ALYL, and FIGL…LPAL.

The protein belongs to the KdpA family. As to quaternary structure, the system is composed of three essential subunits: KdpA, KdpB and KdpC.

It localises to the cell membrane. Part of the high-affinity ATP-driven potassium transport (or Kdp) system, which catalyzes the hydrolysis of ATP coupled with the electrogenic transport of potassium into the cytoplasm. This subunit binds the extracellular potassium ions and delivers the ions to the membrane domain of KdpB through an intramembrane tunnel. The polypeptide is Potassium-transporting ATPase potassium-binding subunit (Listeria monocytogenes serovar 1/2a (strain ATCC BAA-679 / EGD-e)).